The primary structure comprises 143 residues: Large ribosomal subunit protein uL15 (143 aa).

The disordered stretch occupies residues 1-52 (MKLNTLAPAAGSKSAPKRLGRGIGSGLGKTSGKGHKGQKARSGGYHKVGFEG). Gly residues predominate over residues 21-31 (RGIGSGLGKTS).

It belongs to the universal ribosomal protein uL15 family. In terms of assembly, part of the 50S ribosomal subunit.

In terms of biological role, binds to the 23S rRNA. In Francisella tularensis subsp. holarctica (strain FTNF002-00 / FTA), this protein is Large ribosomal subunit protein uL15.